The chain runs to 293 residues: 4-diphosphocytidyl-2-C-methyl-D-erythritol kinase (293 aa).

K16 is an active-site residue. 99-109 is a binding site for ATP; sequence PMGAGLGGGSS. D141 is a catalytic residue.

This sequence belongs to the GHMP kinase family. IspE subfamily.

It catalyses the reaction 4-CDP-2-C-methyl-D-erythritol + ATP = 4-CDP-2-C-methyl-D-erythritol 2-phosphate + ADP + H(+). It participates in isoprenoid biosynthesis; isopentenyl diphosphate biosynthesis via DXP pathway; isopentenyl diphosphate from 1-deoxy-D-xylulose 5-phosphate: step 3/6. Functionally, catalyzes the phosphorylation of the position 2 hydroxy group of 4-diphosphocytidyl-2C-methyl-D-erythritol. This is 4-diphosphocytidyl-2-C-methyl-D-erythritol kinase from Burkholderia lata (strain ATCC 17760 / DSM 23089 / LMG 22485 / NCIMB 9086 / R18194 / 383).